Consider the following 144-residue polypeptide: Large ribosomal subunit protein uL15 (144 aa).

Residues 1–57 (MQLNDLRSAPGARREKHRPGRGIGSGLGKTGGRGHKGLTSRSGGKVAPGFEGGQQPL) are disordered. Gly residues predominate over residues 21–31 (RGIGSGLGKTG).

This sequence belongs to the universal ribosomal protein uL15 family. Part of the 50S ribosomal subunit.

Functionally, binds to the 23S rRNA. The protein is Large ribosomal subunit protein uL15 of Pseudomonas aeruginosa (strain LESB58).